Consider the following 565-residue polypeptide: Oxygen-dependent choline dehydrogenase (565 aa).

6-35 lines the FAD pocket; it reads DYIIVGAGSAGNTLATRLTEDASVSVLLLE. Residues 182–203 form a disordered region; the sequence is QQEGFGPMDRSVTKKGRRSSTA. His475 functions as the Proton acceptor in the catalytic mechanism.

The protein belongs to the GMC oxidoreductase family. It depends on FAD as a cofactor.

The enzyme catalyses choline + A = betaine aldehyde + AH2. It catalyses the reaction betaine aldehyde + NAD(+) + H2O = glycine betaine + NADH + 2 H(+). Its pathway is amine and polyamine biosynthesis; betaine biosynthesis via choline pathway; betaine aldehyde from choline (cytochrome c reductase route): step 1/1. Functionally, involved in the biosynthesis of the osmoprotectant glycine betaine. Catalyzes the oxidation of choline to betaine aldehyde and betaine aldehyde to glycine betaine at the same rate. The sequence is that of Oxygen-dependent choline dehydrogenase from Pseudomonas entomophila (strain L48).